The primary structure comprises 208 residues: Small ribosomal subunit protein uS4 (208 aa).

Residues 98–161 (RRLDNVIYRL…RKMPVIAEAQ (64 aa)) enclose the S4 RNA-binding domain.

Belongs to the universal ribosomal protein uS4 family. In terms of assembly, part of the 30S ribosomal subunit. Contacts protein S5. The interaction surface between S4 and S5 is involved in control of translational fidelity.

Functionally, one of the primary rRNA binding proteins, it binds directly to 16S rRNA where it nucleates assembly of the body of the 30S subunit. Its function is as follows. With S5 and S12 plays an important role in translational accuracy. The chain is Small ribosomal subunit protein uS4 from Oleidesulfovibrio alaskensis (strain ATCC BAA-1058 / DSM 17464 / G20) (Desulfovibrio alaskensis).